A 36-amino-acid polypeptide reads, in one-letter code: Thrombin-like enzyme TLP (36 aa).

A Peptidase S1 domain is found at 1 to 36 (IGGFECNEHEHRSLVYLYNSAGFFCAGTLLNHEWVV).

It belongs to the peptidase S1 family. Snake venom subfamily. In terms of assembly, monomer. In terms of tissue distribution, expressed by the venom gland.

The protein localises to the secreted. In terms of biological role, thrombin-like snake venom serine protease. Shows strong hydrolytic activity towards Boc-Asp(oBzl)-Pro-Arg-MCA, a synthetic substrate for thrombin. In Naja naja (Indian cobra), this protein is Thrombin-like enzyme TLP.